We begin with the raw amino-acid sequence, 475 residues long: MSSQARTQTRAGFKAGVKDYRLTYYTPEYTPKETDILAAFRMTPQPGVPPEECAAAVAAESSTGTWTTVWTDGLTSLDRYKGRSYGFEPVPGEENQYICYVAYPLDLFEEGSVTNMLTSIVGNVFGFKALRALRLEDLRIPVGYSKTFQGPPHGITVERDKLNKYGRALLGCTIKPKLGLSAKNYGRAVYECLRGGLDFTKDDENVNSQPFMRWRDRFLYVMDAIKKSQAETGEIKGHYLNATAPTTEEMIKRAEFAAELDAPIIMHDYITAGFTSNTTLARWCRDNGPLLHIHRAMHAVIDRQKNHGIHFRVLAKTLRMSGGDHLHSGTVVGKLEGDRAGTLGFVDLMRDDHIEQDRSRGIFFTQDWASMPGVMPVASGGIHIWHMPALVDIFGDDSCLQFGGGTLGHPWGNAPGAVANRVALEACVQARNEGRNLAREGNEIIREAARFSPELAAACEVWKEIKFEFETIDTI.

Positions 123 and 173 each coordinate substrate. The active-site Proton acceptor is K175. Substrate is bound at residue K177. Mg(2+)-binding residues include K201, D203, and E204. Position 201 is an N6-carboxylysine (K201). H294 serves as the catalytic Proton acceptor. Substrate contacts are provided by R295, H327, and S379.

It belongs to the RuBisCO large chain family. Type I subfamily. Heterohexadecamer of 8 large chains and 8 small chains. The cofactor is Mg(2+).

The protein resides in the plastid. The protein localises to the cyanelle. The catalysed reaction is 2 (2R)-3-phosphoglycerate + 2 H(+) = D-ribulose 1,5-bisphosphate + CO2 + H2O. It catalyses the reaction D-ribulose 1,5-bisphosphate + O2 = 2-phosphoglycolate + (2R)-3-phosphoglycerate + 2 H(+). Functionally, ruBisCO catalyzes two reactions: the carboxylation of D-ribulose 1,5-bisphosphate, the primary event in carbon dioxide fixation, as well as the oxidative fragmentation of the pentose substrate in the photorespiration process. Both reactions occur simultaneously and in competition at the same active site. The sequence is that of Ribulose bisphosphate carboxylase large chain from Cyanophora paradoxa.